We begin with the raw amino-acid sequence, 615 residues long: Translation initiation factor IF-2 (615 aa).

The 168-residue stretch at 118–285 folds into the tr-type G domain; sequence KRPPIVTVMG…AILTLAEINE (168 aa). The interval 127-134 is G1; the sequence is GHVDHGKT. Position 127 to 134 (127 to 134) interacts with GTP; the sequence is GHVDHGKT. Positions 152–156 are G2; the sequence is GITQH. A G3 region spans residues 173–176; it reads DTPG. Residues 173–177 and 227–230 each bind GTP; these read DTPGH and NKMD. A G4 region spans residues 227-230; sequence NKMD. The segment at 263 to 265 is G5; that stretch reads SAI.

Belongs to the TRAFAC class translation factor GTPase superfamily. Classic translation factor GTPase family. IF-2 subfamily.

It localises to the cytoplasm. Functionally, one of the essential components for the initiation of protein synthesis. Protects formylmethionyl-tRNA from spontaneous hydrolysis and promotes its binding to the 30S ribosomal subunits. Also involved in the hydrolysis of GTP during the formation of the 70S ribosomal complex. The sequence is that of Translation initiation factor IF-2 from Mycoplasmoides gallisepticum (strain R(low / passage 15 / clone 2)) (Mycoplasma gallisepticum).